The chain runs to 732 residues: Acylamino-acid-releasing enzyme (732 aa).

Met-1 carries the post-translational modification Blocked amino end (Met); alternate. Met-1 carries the post-translational modification N-acetylmethionine; alternate. Residues Ser-185 and Ser-187 each carry the phosphoserine modification. Catalysis depends on charge relay system residues Ser-587, Asp-675, and His-707.

Belongs to the peptidase S9C family. As to quaternary structure, homotetramer.

The protein localises to the cytoplasm. It carries out the reaction Cleavage of an N-acetyl or N-formyl amino acid from the N-terminus of a polypeptide.. Homotetramerization is required for activity. Tetramerization results in the formation of a gated channel which is involved in substrate selection and substrate access to the catalytic sites. In terms of biological role, this enzyme catalyzes the hydrolysis of the N-terminal peptide bond of an N-acetylated peptide to generate an N-acetylated amino acid and a peptide with a free N-terminus. It preferentially cleaves off Ac-Ala, Ac-Met and Ac-Ser. Also, involved in the degradation of oxidized and glycated proteins. The polypeptide is Acylamino-acid-releasing enzyme (Apeh) (Rattus norvegicus (Rat)).